The primary structure comprises 299 residues: ATP phosphoribosyltransferase (299 aa).

The protein belongs to the ATP phosphoribosyltransferase family. Long subfamily. Equilibrium between an active dimeric form, an inactive hexameric form and higher aggregates. Interconversion between the various forms is largely reversible and is influenced by the natural substrates and inhibitors of the enzyme. Requires Mg(2+) as cofactor.

The protein resides in the cytoplasm. It carries out the reaction 1-(5-phospho-beta-D-ribosyl)-ATP + diphosphate = 5-phospho-alpha-D-ribose 1-diphosphate + ATP. The protein operates within amino-acid biosynthesis; L-histidine biosynthesis; L-histidine from 5-phospho-alpha-D-ribose 1-diphosphate: step 1/9. Its activity is regulated as follows. Feedback inhibited by histidine. Catalyzes the condensation of ATP and 5-phosphoribose 1-diphosphate to form N'-(5'-phosphoribosyl)-ATP (PR-ATP). Has a crucial role in the pathway because the rate of histidine biosynthesis seems to be controlled primarily by regulation of HisG enzymatic activity. This chain is ATP phosphoribosyltransferase, found in Escherichia coli O8 (strain IAI1).